The primary structure comprises 100 residues: Small ribosomal subunit protein uS14c (100 aa).

This sequence belongs to the universal ribosomal protein uS14 family. In terms of assembly, part of the 30S ribosomal subunit.

It is found in the plastid. Functionally, binds 16S rRNA, required for the assembly of 30S particles. The protein is Small ribosomal subunit protein uS14c (rps14) of Cuscuta gronovii (Common dodder).